The sequence spans 146 residues: 3-dehydroquinate dehydratase (146 aa).

Tyr-24 acts as the Proton acceptor in catalysis. Substrate-binding residues include Asn-73, His-79, and Asp-86. The Proton donor role is filled by His-99. Substrate is bound by residues 100–101 (LS) and Arg-110.

Belongs to the type-II 3-dehydroquinase family. As to quaternary structure, homododecamer.

It catalyses the reaction 3-dehydroquinate = 3-dehydroshikimate + H2O. It functions in the pathway metabolic intermediate biosynthesis; chorismate biosynthesis; chorismate from D-erythrose 4-phosphate and phosphoenolpyruvate: step 3/7. In terms of biological role, catalyzes a trans-dehydration via an enolate intermediate. This is 3-dehydroquinate dehydratase from Shewanella oneidensis (strain ATCC 700550 / JCM 31522 / CIP 106686 / LMG 19005 / NCIMB 14063 / MR-1).